Consider the following 380-residue polypeptide: Cytochrome b (380 aa).

A run of 4 helical transmembrane segments spans residues 33-53, 77-98, 113-133, and 178-198; these read FGSLLGACLILQITTGLFLAM, WTIRYLHANGASMFFICLFLHI, WNIGIILLLTTMAAAFMGYVL, and FFTFHFILPFIITALTTLHLL. Residues H83 and H97 each contribute to the heme b site. Residues H182 and H196 each coordinate heme b. H201 provides a ligand contact to a ubiquinone. A run of 4 helical transmembrane segments spans residues 226-246, 288-308, 320-340, and 347-367; these read IKDILGLFLFLLTLMTLTLFS, LGGVLALLLSILILAMIPILH, LSQLLYWFLIADLFTLTWIGG, and FITIGQVASVLYFTTILFLMP.

It belongs to the cytochrome b family. In terms of assembly, the cytochrome bc1 complex contains 11 subunits: 3 respiratory subunits (MT-CYB, CYC1 and UQCRFS1), 2 core proteins (UQCRC1 and UQCRC2) and 6 low-molecular weight proteins (UQCRH/QCR6, UQCRB/QCR7, UQCRQ/QCR8, UQCR10/QCR9, UQCR11/QCR10 and a cleavage product of UQCRFS1). This cytochrome bc1 complex then forms a dimer. Heme b is required as a cofactor.

The protein localises to the mitochondrion inner membrane. Functionally, component of the ubiquinol-cytochrome c reductase complex (complex III or cytochrome b-c1 complex) that is part of the mitochondrial respiratory chain. The b-c1 complex mediates electron transfer from ubiquinol to cytochrome c. Contributes to the generation of a proton gradient across the mitochondrial membrane that is then used for ATP synthesis. This Gorilla gorilla gorilla (Western lowland gorilla) protein is Cytochrome b (MT-CYB).